An 828-amino-acid chain; its full sequence is Class I hydrophobin hum3 (828 aa).

The first 22 residues, 1–22, serve as a signal peptide directing secretion; it reads MKYLQFLAAVAAVSAFSGPVLA. N-linked (GlcNAc...) asparagine glycans are attached at residues Asn156, Asn222, and Asn738. Disulfide bonds link Cys750–Cys808, Cys757–Cys802, Cys758–Cys788, and Cys809–Cys822. Asn811 is a glycosylation site (N-linked (GlcNAc...) asparagine).

The protein in the C-terminal section; belongs to the fungal hydrophobin family. As to quaternary structure, self-assembles to form functional amyloid fibrils called rodlets. Self-assembly into fibrillar rodlets occurs spontaneously at hydrophobic:hydrophilic interfaces and the rodlets further associate laterally to form amphipathic monolayers. In terms of processing, hum3 is an atypical hydrophobin that consists in a repetitive repellent-like region that spans 578 aa which is separated from a hydrophobin-like domain by a spacer region containing three possible kex2 processing sites. The repetitive region contains 17 amphipathic repeats of 31-36 aa each of them with a C-terminal putative kex2 processing motif.

The protein resides in the secreted. It localises to the cell wall. In terms of biological role, aerial growth, conidiation, and dispersal of filamentous fungi in the environment rely upon a capability of their secreting small amphipathic proteins called hydrophobins (HPBs) with low sequence identity. Class I can self-assemble into an outermost layer of rodlet bundles on aerial cell surfaces, conferring cellular hydrophobicity that supports fungal growth, development and dispersal; whereas Class II form highly ordered films at water-air interfaces through intermolecular interactions but contribute nothing to the rodlet structure. Atypical class I hydrophobin that is preceded by a signal sequence and 17 imperfect repeats. The repeated peptides might function as repellents whereas the class I hydrophobin seems not to be crucial for the formation of aerial hyphae. Hydrophobins of Mycosarcoma maydis have been functionally replaced, at least partially, by repellents. Hum3 and rsp1 together are pathogenicity proteins that share an essential function in early stages of the infection. The protein is Class I hydrophobin hum3 of Mycosarcoma maydis (Corn smut fungus).